The primary structure comprises 2385 residues: Neuron navigator 3 (2385 aa).

The tract at residues 17-38 is disordered; sequence SKPVHTALPIPNLGTTGSQHCS. The segment covering 29–38 has biased composition (polar residues); the sequence is LGTTGSQHCS. One can recognise a Calponin-homology (CH) domain in the interval 77–184; it reads KEDSKIYTDW…LFFSLSRYKQ (108 aa). The disordered stretch occupies residues 203–625; it reads VTHASPPSEA…LPQQQQHSHP (423 aa). Composition is skewed to polar residues over residues 210–243, 258–279, and 297–316; these read SEASQAKTQQDMQSSLAARYATQSNHSGIATSQK, GSSSKVQGASNLNRRSQSFNSI, and KGPQSSSGVNGNVQPPSTAG. Positions 318–329 are enriched in low complexity; the sequence is PPASAIPSPSAS. Residues 335-352 show a composition bias toward polar residues; the sequence is KSMNVKHSATSTMLTVKQ. Low complexity-rich tracts occupy residues 353-363 and 427-439; these read SSTATSPTPSS and NSGLNSGGSTNSS. The span at 465 to 491 shows a compositional bias: basic and acidic residues; the sequence is PKEKEEKNRDKNKVCTEKPVKEEKDQV. A compositionally biased stretch (low complexity) spans 521–535; it reads IPSSSGIPKPGSKVP. Composition is skewed to polar residues over residues 537-548, 557-567, and 591-625; these read VKQTISPGSTAS, TKGSPSQSLSK, and ASPSGSCTMTVAQSSGQSTGNGAVQLPQQQQHSHP. Positions 679 to 707 form a coiled coil; sequence ETRRMRTVKNIADLRQNLEETMSSLRGTQ. Disordered stretches follow at residues 877 to 1312, 1351 to 1370, 1410 to 1468, 1650 to 1778, 1850 to 1881, and 2360 to 2385; these read ADSW…SPLF, SSSSAGSKDTPSYQSMTSLH, LSES…SAMS, GALN…KRQN, DRLKAETGNTAKPTRPPSESSSSTSSSSSRQS, and SSTQSCDSESTSHHEDILDSSLESTL. Positions 882–895 are enriched in low complexity; that stretch reads DSSSVSSGLSDTLD. The segment covering 896–925 has biased composition (polar residues); that stretch reads NISTDDLNTTSSVSSYSNITVPSRKNTQLR. Basic and acidic residues predominate over residues 942–959; sequence EELKKPEEDFDSHGDAGG. Polar residues predominate over residues 979-988; that stretch reads ASLSVSQTGS. Over residues 1014 to 1026 the composition is skewed to basic and acidic residues; sequence GKTDDAKASEKGK. 2 stretches are compositionally biased toward low complexity: residues 1074–1092 and 1157–1170; these read GSSAMITSSGATITSGSAT and SSTSSIDSNVSSKS. Over residues 1187–1196 the composition is skewed to polar residues; the sequence is GRSSPVTVNQ. Composition is skewed to low complexity over residues 1206–1226 and 1253–1263; these read VSDSESVSLSGSPKSSPTSAS and GAKAGGKSASA. Residues 1264-1289 show a composition bias toward polar residues; that stretch reads PNTEGVKSSSVMPSPSTTLARQGSLE. Residues 1296–1305 show a composition bias toward gly residues; the sequence is GSMGSAGGLS. A compositionally biased stretch (basic and acidic residues) spans 1436–1445; it reads NQEEGKEWLR. Residues 1446 to 1462 show a composition bias toward polar residues; sequence SHSTGGLQDTGNQSPLV. Residues Ser1459 and Ser1463 each carry the phosphoserine modification. A coiled-coil region spans residues 1562-1653; that stretch reads AEEKAHSEQI…AQAAIQGALN (92 aa). Residues 1672-1689 are compositionally biased toward low complexity; the sequence is SVSSINSATSHSSIGSGN. Polar residues predominate over residues 1701–1714; it reads WVNSRGSELRSSFK. Residues 1794-1861 are a coiled coil; sequence EAEAEIILQL…LKAETGNTAK (68 aa). Residues 1867-1881 are compositionally biased toward low complexity; sequence SESSSSTSSSSSRQS.

Belongs to the Nav/unc-53 family. Highly expressed in brain. Expressed at low levels in heart and placenta. Present in activated T-cells but not in resting T-cells (at protein level). Down-regulated in primary neuroblastoma.

It localises to the nucleus outer membrane. Plays a role in cell migration. May be involved in neuron regeneration. May regulate IL2 production by T-cells. This chain is Neuron navigator 3 (NAV3), found in Homo sapiens (Human).